A 359-amino-acid chain; its full sequence is Fructose-like permease IIC component 2 (359 aa).

The PTS EIIC type-2 domain occupies 11–344; it reads TRQHLMTGVS…KSLARKNGSS (334 aa). A run of 9 helical transmembrane segments spans residues 19 to 39, 60 to 80, 99 to 119, 135 to 155, 176 to 196, 216 to 236, 251 to 271, 290 to 310, and 314 to 334; these read VSHMIPFVVSGGILLAVSVML, IGVAGLTLMVPFLAAYIGYSI, FGAGFFGALIAGIIGGIVVHY, IFIIPIVGTLITAGIMMWGLG, SIVMLAVIMGLMLAFDMGGPV, VAIAAVGICIPPLGMGLATLI, AALVMGCVGVTEGAIPFAAAD, AALVGAQCYAGWGGLIVLPVV, and LGYIAAVAVGAVVTAVCVNVL.

It localises to the cell inner membrane. In terms of biological role, the phosphoenolpyruvate-dependent sugar phosphotransferase system (PTS), a major carbohydrate active -transport system, catalyzes the phosphorylation of incoming sugar substrates concomitant with their translocation across the cell membrane. This is Fructose-like permease IIC component 2 (frwC) from Escherichia coli (strain K12).